Reading from the N-terminus, the 360-residue chain is Photosystem II protein D1 2 (360 aa).

The next 3 helical transmembrane spans lie at 29-46, 118-133, and 142-156; these read YVGW…TATI, HFLI…EWEL, and WICV…AATA. His-118 serves as a coordination point for chlorophyll a. Tyr-126 provides a ligand contact to pheophytin a. [CaMn4O5] cluster contacts are provided by Asp-170 and Glu-189. A helical transmembrane segment spans residues 197–218; sequence FHMLGVAGVFGGSLFSAMHGSL. His-198 is a chlorophyll a binding site. A quinone-binding positions include His-215 and 264-265; that span reads SF. His-215 provides a ligand contact to Fe cation. Residue His-272 participates in Fe cation binding. A helical transmembrane segment spans residues 274–288; it reads FLAAWPVVGIWFTSL. Residues His-332, Glu-333, Asp-342, and Ala-344 each coordinate [CaMn4O5] cluster. A propeptide spanning residues 345–360 is cleaved from the precursor; sequence AGEATPVALTAPAING.

The protein belongs to the reaction center PufL/M/PsbA/D family. PSII is composed of 1 copy each of membrane proteins PsbA, PsbB, PsbC, PsbD, PsbE, PsbF, PsbH, PsbI, PsbJ, PsbK, PsbL, PsbM, PsbT, PsbX, PsbY, PsbZ, Psb30/Ycf12, peripheral proteins PsbO, CyanoQ (PsbQ), PsbU, PsbV and a large number of cofactors. It forms dimeric complexes. The D1/D2 heterodimer binds P680, chlorophylls that are the primary electron donor of PSII, and subsequent electron acceptors. It shares a non-heme iron and each subunit binds pheophytin, quinone, additional chlorophylls, carotenoids and lipids. D1 provides most of the ligands for the Mn4-Ca-O5 cluster of the oxygen-evolving complex (OEC). There is also a Cl(-1) ion associated with D1 and D2, which is required for oxygen evolution. The PSII complex binds additional chlorophylls, carotenoids and specific lipids. is required as a cofactor. Post-translationally, tyr-161 forms a radical intermediate that is referred to as redox-active TyrZ, YZ or Y-Z. In terms of processing, C-terminally processed by CtpA; processing is essential to allow assembly of the oxygen-evolving complex and thus photosynthetic growth.

The protein resides in the cellular thylakoid membrane. It carries out the reaction 2 a plastoquinone + 4 hnu + 2 H2O = 2 a plastoquinol + O2. In terms of biological role, photosystem II (PSII) is a light-driven water:plastoquinone oxidoreductase that uses light energy to abstract electrons from H(2)O, generating O(2) and a proton gradient subsequently used for ATP formation. It consists of a core antenna complex that captures photons, and an electron transfer chain that converts photonic excitation into a charge separation. The D1/D2 (PsbA/PsbD) reaction center heterodimer binds P680, the primary electron donor of PSII as well as several subsequent electron acceptors. The chain is Photosystem II protein D1 2 from Synechococcus elongatus (strain ATCC 33912 / PCC 7942 / FACHB-805) (Anacystis nidulans R2).